A 160-amino-acid polypeptide reads, in one-letter code: Ureidoglycolate lyase (160 aa).

The protein belongs to the ureidoglycolate lyase family. In terms of assembly, homodimer. Requires Ni(2+) as cofactor.

The catalysed reaction is (S)-ureidoglycolate = urea + glyoxylate. Its pathway is nitrogen metabolism; (S)-allantoin degradation. Functionally, catalyzes the catabolism of the allantoin degradation intermediate (S)-ureidoglycolate, generating urea and glyoxylate. Involved in the anaerobic utilization of allantoin as sole nitrogen source. Reinforces the induction of genes involved in the degradation of allantoin and glyoxylate by producing glyoxylate. This is Ureidoglycolate lyase from Shigella flexneri serotype 5b (strain 8401).